The sequence spans 404 residues: Glucose-1-phosphate adenylyltransferase (404 aa).

Residues Y99, G164, 179-180 (EK), and S197 each bind alpha-D-glucose 1-phosphate.

It belongs to the bacterial/plant glucose-1-phosphate adenylyltransferase family.

It catalyses the reaction alpha-D-glucose 1-phosphate + ATP + H(+) = ADP-alpha-D-glucose + diphosphate. It participates in glycan biosynthesis; glycogen biosynthesis. Functionally, involved in the biosynthesis of ADP-glucose, a building block, required in the biosynthesis of maltose-1-phosphate (M1P) and in the elongation reactions to produce linear alpha-1,4-glucans. Catalyzes the reaction between ATP and alpha-D-glucose 1-phosphate (G1P) to produce pyrophosphate and ADP-Glc. The protein is Glucose-1-phosphate adenylyltransferase of Mycolicibacterium vanbaalenii (strain DSM 7251 / JCM 13017 / BCRC 16820 / KCTC 9966 / NRRL B-24157 / PYR-1) (Mycobacterium vanbaalenii).